The sequence spans 494 residues: Syntaphilin (494 aa).

Residues 1–75 (MAMSLPGSRR…GIKPPTPEQY (75 aa)) are disordered. Low complexity predominate over residues 7–49 (GSRRTSAGSRRRTSPPVSVRDAYGTSSLSSSSNSGSYKGSDSS). Residues 79–161 (LQQKEVCIRH…VKNNLIDKDK (83 aa)) are a coiled coil. Disordered regions lie at residues 191-246 (MAKE…SGFA) and 338-398 (CGTD…GQSV). Phosphoserine occurs at positions 200 and 204. Polar residues predominate over residues 207 to 217 (RSLTRSSTYTK). At threonine 214 the chain carries Phosphothreonine. Serine 219 bears the Phosphoserine mark. The span at 230–246 (GDPSSGSAEDGADSGFA) shows a compositional bias: low complexity. Basic and acidic residues predominate over residues 344–353 (SGDRCPELDA). The helical transmembrane segment at 425–444 (YIVDLLAVVVPAVPTVAWLC) threads the bilayer.

Binds to STX1A. Interacts with DNM1; this interaction inhibits the binding of DNM1 to AMPH and DNM1-receptor-mediated endocytosis. As to expression, brain specific. Found in synapses.

Its subcellular location is the membrane. It is found in the synapse. It localises to the synaptosome. Inhibits SNARE complex formation by absorbing free STX1A. The sequence is that of Syntaphilin from Homo sapiens (Human).